Here is a 599-residue protein sequence, read N- to C-terminus: MHLDNSSCNLASLNLMKFLRDDTASDGASGAGGNMSLDAERFAKVVELVITAMDISICFADFPTEKIGETTRAFRQLGIGYANLGALLMATGHAYDSDGGRALAGAITSLMTGTSYRRSAELAAVVGPYEGYARNADAHKRVMRQHADANTAAQRMDDLDTPVWAAATEAWQDVLRLGEQNRFRNAQASVLAPTGTIGLMMDCDTTGVEPDLALVKFKKLVGGGSMQIVNNTVPKALKRLGYQPEQVEAVVAHIAEHGNVIDAPGLKPEHYEVFDCAMGERAISPMGHVRMMAAAQPFLSGAISKTVNMPESATVEEIEEIYYEGWKLGLKALAIYRDNCKVGQPLSAKKKEEAKTEAPAEVEKVVEYRPVRKRLPKGRPGITTSFTVGGAEGYMTANSYPDDGLGEVFLKMSKQGSTLAGMMDAFSIAVSVGLQYGVPLETYVSKFTNMRFEPAGLTDDPDVRMAQSIVDYIFRRLALDFLPFETRSALGIHSAEERQRHLDTGSYEPAEDELDVEGLAQSAPRQAGPAKAATTAPAAKAQEPAAAPSPKQAHNSTELLEIQQGLNADAPLCFSCGTKMRRAGSCYVCEGCGSTSGCS.

193 to 197 (PTGTI) contributes to the substrate binding site. The segment at 519–555 (LAQSAPRQAGPAKAATTAPAAKAQEPAAAPSPKQAHN) is disordered. A compositionally biased stretch (low complexity) spans 526 to 553 (QAGPAKAATTAPAAKAQEPAAAPSPKQA).

The protein belongs to the ribonucleoside diphosphate reductase class-2 family. Adenosylcob(III)alamin serves as cofactor.

It catalyses the reaction a 2'-deoxyribonucleoside 5'-diphosphate + [thioredoxin]-disulfide + H2O = a ribonucleoside 5'-diphosphate + [thioredoxin]-dithiol. Functionally, catalyzes the reduction of ribonucleotides to deoxyribonucleotides. May function to provide a pool of deoxyribonucleotide precursors for DNA repair during oxygen limitation and/or for immediate growth after restoration of oxygen. The sequence is that of Vitamin B12-dependent ribonucleotide reductase (nrdJ) from Streptantibioticus cattleyicolor (Streptomyces cattleya).